Consider the following 276-residue polypeptide: Acetyl-coenzyme A carboxylase carboxyl transferase subunit beta (276 aa).

A CoA carboxyltransferase N-terminal domain is found at 24 to 276; it reads LWRECSNCHE…NNLLNLHSDK (253 aa). Residues Cys28, Cys31, Cys46, and Cys49 each coordinate Zn(2+). The segment at 28–49 adopts a C4-type zinc-finger fold; that stretch reads CSNCHEKFYYRRAGVYEVCPNC.

The protein belongs to the AccD/PCCB family. As to quaternary structure, acetyl-CoA carboxylase is a heterohexamer composed of biotin carboxyl carrier protein (AccB), biotin carboxylase (AccC) and two subunits each of ACCase subunit alpha (AccA) and ACCase subunit beta (AccD). Zn(2+) serves as cofactor.

It is found in the cytoplasm. It catalyses the reaction N(6)-carboxybiotinyl-L-lysyl-[protein] + acetyl-CoA = N(6)-biotinyl-L-lysyl-[protein] + malonyl-CoA. It functions in the pathway lipid metabolism; malonyl-CoA biosynthesis; malonyl-CoA from acetyl-CoA: step 1/1. In terms of biological role, component of the acetyl coenzyme A carboxylase (ACC) complex. Biotin carboxylase (BC) catalyzes the carboxylation of biotin on its carrier protein (BCCP) and then the CO(2) group is transferred by the transcarboxylase to acetyl-CoA to form malonyl-CoA. This Pediococcus pentosaceus (strain ATCC 25745 / CCUG 21536 / LMG 10740 / 183-1w) protein is Acetyl-coenzyme A carboxylase carboxyl transferase subunit beta.